The following is a 373-amino-acid chain: Enoyl-[acyl-carrier-protein] reductase, mitochondrial (373 aa).

Residues 1-53 constitute a mitochondrion transit peptide; that stretch reads MWVCSTLWRVRTPARQWRGLLPASGCHGPAASSYSASAEPARVRALVYGHHGD. Lys61 carries the N6-acetyllysine; alternate modification. Lys61 carries the post-translational modification N6-succinyllysine; alternate. The active-site Proton donor is the Tyr94. NADP(+) contacts are provided by residues Asn167, 193-196, and 216-218; these read NSGV and RDR. An N6-acetyllysine; alternate mark is found at Lys252 and Lys267. An N6-succinyllysine; alternate mark is found at Lys252 and Lys267. NADP(+) is bound by residues 285–288 and 310–312; these read YGGM and FWL. Lys316 carries the post-translational modification N6-succinyllysine. Lys368 contributes to the NADP(+) binding site.

It belongs to the zinc-containing alcohol dehydrogenase family. Quinone oxidoreductase subfamily. As to quaternary structure, homodimer. Isoform 2 interacts with PPARA in the nucleus and increases its activity. As to expression, highly expressed in skeletal and heart muscle. Expressed at lower level in placenta, liver, kidney and pancreas. Weakly or not expressed in lung.

It is found in the mitochondrion. The protein resides in the cytoplasm. It localises to the nucleus. The catalysed reaction is a 2,3-saturated acyl-[ACP] + NADP(+) = a (2E)-enoyl-[ACP] + NADPH + H(+). It carries out the reaction (2E)-butenoyl-[ACP] + NADPH + H(+) = butanoyl-[ACP] + NADP(+). The enzyme catalyses (2E)-hexenoyl-[ACP] + NADPH + H(+) = hexanoyl-[ACP] + NADP(+). It catalyses the reaction (2E)-octenoyl-[ACP] + NADPH + H(+) = octanoyl-[ACP] + NADP(+). The catalysed reaction is (2E)-decenoyl-[ACP] + NADPH + H(+) = decanoyl-[ACP] + NADP(+). It carries out the reaction (2E)-dodecenoyl-[ACP] + NADPH + H(+) = dodecanoyl-[ACP] + NADP(+). The enzyme catalyses (2E)-tetradecenoyl-[ACP] + NADPH + H(+) = tetradecanoyl-[ACP] + NADP(+). It catalyses the reaction (2E)-hexadecenoyl-[ACP] + NADPH + H(+) = hexadecanoyl-[ACP] + NADP(+). Functionally, catalyzes the NADPH-dependent reduction of trans-2-enoyl thioesters in mitochondrial fatty acid synthesis (fatty acid synthesis type II). Fatty acid chain elongation in mitochondria uses acyl carrier protein (ACP) as an acyl group carrier, but the enzyme accepts both ACP and CoA thioesters as substrates in vitro. Displays a preference for medium-chain over short- and long-chain substrates. May provide the octanoyl chain used for lipoic acid biosynthesis, regulating protein lipoylation and mitochondrial respiratory activity particularly in Purkinje cells. Involved in iron homeostasis; affecting Fe-S cluster assembly and ceramide metabolism. Required for proper morphology and bioenergetic functions of mitochondria. Required for maintenance of neurons. The sequence is that of Enoyl-[acyl-carrier-protein] reductase, mitochondrial (MECR) from Homo sapiens (Human).